The chain runs to 328 residues: tRNA methyltransferase 10 homolog A (328 aa).

2 disordered regions span residues 1-91 (MSSE…RKRV) and 281-328 (HKAC…PVLQ). Ser-22 carries the post-translational modification Phosphoserine. Positions 43-83 (RQLKKLMKQKQWEEQREQRKEKRKEKRKRKKLERRQLESNS) form a coiled coil. The segment covering 52-62 (KQWEEQREQRK) has biased composition (basic and acidic residues). Basic residues predominate over residues 63–75 (EKRKEKRKRKKLE). The SAM-dependent MTase TRM10-type domain maps to 88–278 (RKRVRRDVAR…TILPQRKGAV (191 aa)). Over residues 305 to 319 (ESCRDNPDSPQKDEQ) the composition is skewed to basic and acidic residues.

The protein belongs to the class IV-like SAM-binding methyltransferase superfamily. TRM10 family. Interacts with tRNA.

Its subcellular location is the nucleus. It localises to the nucleolus. The catalysed reaction is guanosine(9) in tRNA + S-adenosyl-L-methionine = N(1)-methylguanosine(9) in tRNA + S-adenosyl-L-homocysteine + H(+). Functionally, S-adenosyl-L-methionine-dependent guanine N(1)-methyltransferase that catalyzes the formation of N(1)-methylguanine at position 9 (m1G9) in tRNAs. Probably not able to catalyze formation of N(1)-methyladenine at position 9 (m1A9) in tRNAs. The chain is tRNA methyltransferase 10 homolog A (Trmt10a) from Mus musculus (Mouse).